Consider the following 490-residue polypeptide: Cysteine protease 1 (490 aa).

Residues 1–31 (MAGGGGKSVAAALAMACFLLILAAFAPPAAA) form the signal peptide. Positions 32–154 (APPDIMSIIR…EAYRHDGVEA (123 aa)) are cleaved as a propeptide — activation peptide. 5 cysteine pairs are disulfide-bonded: C177–C220, C211–C253, C311–C364, C395–C407, and C401–C422. Residue C180 is part of the active site. Residues H317 and N339 contribute to the active site. N-linked (GlcNAc...) asparagine glycosylation occurs at N356. Residues 379–490 (NPKPSPPSPA…FVVLNREDLV (112 aa)) constitute a propeptide, removed in mature form.

It belongs to the peptidase C1 family. Highly expressed in the tapetum and developing pollen of the anther locules. Weakly expressed in root and germinating seed, hardly in the anther-less-flower and not detected in leaf.

Cysteine protease that may play a role in pollen development. May be regulated by the transcription factor UDT1 in developing anthers and play a role in tapetum development. Positively regulated by the transcription factor TDR in developing anthers and may play a role in tapetum programmed cell death (PCD). This Oryza sativa subsp. japonica (Rice) protein is Cysteine protease 1 (CP1).